A 285-amino-acid chain; its full sequence is Energy-coupling factor transporter ATP-binding protein EcfA3 (285 aa).

An ABC transporter domain is found at 6 to 242; it reads LKVEELNYNY…KEVIRKVNLR (237 aa). Residue 39 to 46 coordinates ATP; it reads GGNGVGKS.

It belongs to the ABC transporter superfamily. Energy-coupling factor EcfA family. In terms of assembly, forms a stable energy-coupling factor (ECF) transporter complex composed of 2 membrane-embedded substrate-binding proteins (S component), 2 ATP-binding proteins (A component) and 2 transmembrane proteins (T component).

The protein resides in the cell membrane. Its function is as follows. ATP-binding (A) component of a common energy-coupling factor (ECF) ABC-transporter complex. Unlike classic ABC transporters this ECF transporter provides the energy necessary to transport a number of different substrates. The chain is Energy-coupling factor transporter ATP-binding protein EcfA3 from Clostridium perfringens (strain ATCC 13124 / DSM 756 / JCM 1290 / NCIMB 6125 / NCTC 8237 / Type A).